Consider the following 471-residue polypeptide: Ribulose bisphosphate carboxylase large chain (471 aa).

Asparagine 119 and threonine 169 together coordinate substrate. Catalysis depends on lysine 171, which acts as the Proton acceptor. Lysine 173 lines the substrate pocket. Residues lysine 197, aspartate 199, and glutamate 200 each contribute to the Mg(2+) site. Position 197 is an N6-carboxylysine (lysine 197). Histidine 290 acts as the Proton acceptor in catalysis. Residues arginine 291, histidine 323, and serine 375 each coordinate substrate.

It belongs to the RuBisCO large chain family. Type I subfamily. As to quaternary structure, heterohexadecamer of 8 large chains and 8 small chains; disulfide-linked. The disulfide link is formed within the large subunit homodimers. Mg(2+) serves as cofactor. The disulfide bond which can form in the large chain dimeric partners within the hexadecamer appears to be associated with oxidative stress and protein turnover.

It is found in the carboxysome. It catalyses the reaction 2 (2R)-3-phosphoglycerate + 2 H(+) = D-ribulose 1,5-bisphosphate + CO2 + H2O. The enzyme catalyses D-ribulose 1,5-bisphosphate + O2 = 2-phosphoglycolate + (2R)-3-phosphoglycerate + 2 H(+). Functionally, ruBisCO catalyzes two reactions: the carboxylation of D-ribulose 1,5-bisphosphate, the primary event in carbon dioxide fixation, as well as the oxidative fragmentation of the pentose substrate in the photorespiration process. Both reactions occur simultaneously and in competition at the same active site. The protein is Ribulose bisphosphate carboxylase large chain of Microcystis aeruginosa (strain NIES-843 / IAM M-2473).